The sequence spans 450 residues: Probable glycine dehydrogenase (decarboxylating) subunit 1 (450 aa).

It belongs to the GcvP family. N-terminal subunit subfamily. The glycine cleavage system is composed of four proteins: P, T, L and H. In this organism, the P 'protein' is a heterodimer of two subunits.

It catalyses the reaction N(6)-[(R)-lipoyl]-L-lysyl-[glycine-cleavage complex H protein] + glycine + H(+) = N(6)-[(R)-S(8)-aminomethyldihydrolipoyl]-L-lysyl-[glycine-cleavage complex H protein] + CO2. The glycine cleavage system catalyzes the degradation of glycine. The P protein binds the alpha-amino group of glycine through its pyridoxal phosphate cofactor; CO(2) is released and the remaining methylamine moiety is then transferred to the lipoamide cofactor of the H protein. In Brevibacillus brevis (strain 47 / JCM 6285 / NBRC 100599), this protein is Probable glycine dehydrogenase (decarboxylating) subunit 1.